Reading from the N-terminus, the 443-residue chain is Citrate transporter CitP (443 aa).

13 consecutive transmembrane segments (helical) span residues 27–47 (ISGI…IAIS), 59–79 (IFAL…LPIF), 83–103 (LGGG…TNVM), 114–134 (FING…SSLF), 151–171 (VAFI…VIIG), 177–197 (AILY…IVPL), 209–229 (SAGI…LAII), 268–288 (YVQL…GTML), 294–314 (GINA…FGLL), 322–342 (VIMF…AGVG), 350–370 (VLLA…IVAI), 388–410 (AAIT…VLAA), and 422–442 (MGNR…VTFM).

It belongs to the 2-hydroxycarboxylate transporter (2-HCT) (TC 2.A.24) family.

It is found in the cell membrane. It carries out the reaction (R)-lactate(in) + citrate(out) = (R)-lactate(out) + citrate(in). It catalyses the reaction (S)-lactate(in) + citrate(out) = (S)-lactate(out) + citrate(in). The catalysed reaction is citrate(in) + H(+)(in) = citrate(out) + H(+)(out). Uptake of citrate is not affected by the absence or presence of Na(+) up to 25 mM and is increasingly inhibited by increasing Mg(2+) concentrations. Functionally, secondary transporter involved in citrate metabolism. During cometabolism of citrate and glucose, catalyzes the uptake of divalent citrate into the cell coupled to the exit of monovalent lactate, a product of citrate fermentation during citrate-glucose cometabolism (precursor/product exchange). The citrate/lactate exchange is electrogenic and results in the generation of a membrane potential. In the absence of glucose, i.e. when no lactate is produced, CitP catalyzes the proton-dependent transport of citrate and malate. Transports the divalent form of citrate and malate with the concomitant uptake of one proton, therefore translocating a single unit of negative charge across the membrane. In vitro, transports a range of substrates that contain the 2-hydroxycarboxylate motif, HO-CR(2)-COO(-), with a preference for malate, citrate and monovalent 2-hydroxyisobutyrate. Modification of the OH or the COO(-) groups of the 2-hydroxycarboxylate motif drastically reduces the affinity of the transporter for the substrates, indicating their relevance in substrate recognition. Significant activity is also observed with some 2-oxocarboxylates and a 3-hydroxycarboxylate. This Leuconostoc mesenteroides subsp. mesenteroides protein is Citrate transporter CitP.